The chain runs to 152 residues: Deoxyuridine 5'-triphosphate nucleotidohydrolase (152 aa).

Residues 71 to 73 (RSG), Asn-84, 88 to 90 (LID), and Met-98 contribute to the substrate site.

The protein belongs to the dUTPase family. Homotrimer. It depends on Mg(2+) as a cofactor.

The catalysed reaction is dUTP + H2O = dUMP + diphosphate + H(+). It participates in pyrimidine metabolism; dUMP biosynthesis; dUMP from dCTP (dUTP route): step 2/2. In terms of biological role, this enzyme is involved in nucleotide metabolism: it produces dUMP, the immediate precursor of thymidine nucleotides and it decreases the intracellular concentration of dUTP so that uracil cannot be incorporated into DNA. The protein is Deoxyuridine 5'-triphosphate nucleotidohydrolase of Escherichia coli O157:H7.